The primary structure comprises 1023 residues: Presequence protease, mitochondrial (1023 aa).

The transit peptide at 1-62 (MFRQSKTIIT…PDLFLTAVKL (62 aa)) directs the protein to the mitochondrion. H99 serves as a coordination point for Zn(2+). The active-site Proton acceptor is E102. Residues H103 and E200 each contribute to the Zn(2+) site. Cysteines 114 and 551 form a disulfide.

It belongs to the peptidase M16 family. PreP subfamily. In terms of assembly, monomer and homodimer; homodimerization is induced by binding of the substrate. The cofactor is Zn(2+). In terms of processing, a disulfide bond locks the enzyme in the closed conformation preventing substrate entry into the catalytic chamber.

The protein localises to the mitochondrion matrix. Mainly exists in a closed and catalytically competent conformation but a closed-to-open switch allows substrate entry into the catalytic chamber. Substrate binding induces closure and dimerization. A disulfide bond may lock the enzyme in a closed conformation preventing substrate entry into the catalytic chamber, participating in redox regulation of the enzyme. Inhibited by metal-chelating agents. Inhibited by nickel and zinc excess, and slightly activated by manganese. Metalloendopeptidase of the mitochondrial matrix that functions in peptide cleavage and degradation rather than in protein processing. Has an ATP-independent activity. Specifically cleaves peptides in the range of 5 to 65 residues. Shows a preference for cleavage after small polar residues and before basic residues, but without any positional preference. Degrades the transit peptides of mitochondrial proteins after their cleavage. Also degrades other unstructured peptides. This chain is Presequence protease, mitochondrial (pitrm1), found in Danio rerio (Zebrafish).